We begin with the raw amino-acid sequence, 223 residues long: Serine/threonine/tyrosine-interacting protein (223 aa).

The 149-residue stretch at 28–176 (EMQEILPGLF…LQEYEAIYLA (149 aa)) folds into the Tyrosine-protein phosphatase domain. An Interaction with FBXW7 motif is present at residues 76–78 (FQQ). Phosphoserine is present on residues Ser184, Ser193, and Ser201. The disordered stretch occupies residues 197–223 (GTTGSLKRTHEEEDDFGTMQVATAQNG).

Belongs to the protein-tyrosine phosphatase family. Non-receptor class subfamily. In terms of assembly, interacts with MAPK1; independently of MAPK1 phosphorylation status. Interacts with CARHSP1/Crhsp-24. Interacts (via FQQ motif) with FBXW7 isoforms 1 (via F-box domain) and 3 (via F-box domain); the interaction is direct and prevents FBXW7 interaction with SKP1, a component of the SCF(FBXW7) complex. Does not interact with FBXW7 isoform 2.

It is found in the nucleus. The protein localises to the cytoplasm. The protein resides in the cytosol. Catalytically inactive phosphatase. Acts as a nuclear anchor for MAPK1/MAPK3 (ERK1/ERK2). Modulates cell-fate decisions and cell migration by spatiotemporal regulation of MAPK1/MAPK3 (ERK1/ERK2). By binding to the F-box of FBXW7, prevents the assembly of FBXW7 into the SCF E3 ubiquitin-protein ligase complex, and thereby inhibits degradation of its substrates. Plays a role in spermatogenesis. In Homo sapiens (Human), this protein is Serine/threonine/tyrosine-interacting protein.